The sequence spans 348 residues: UDP-3-O-acylglucosamine N-acyltransferase (348 aa).

The active-site Proton acceptor is His-248.

Belongs to the transferase hexapeptide repeat family. LpxD subfamily. In terms of assembly, homotrimer.

The enzyme catalyses a UDP-3-O-[(3R)-3-hydroxyacyl]-alpha-D-glucosamine + a (3R)-hydroxyacyl-[ACP] = a UDP-2-N,3-O-bis[(3R)-3-hydroxyacyl]-alpha-D-glucosamine + holo-[ACP] + H(+). Its pathway is bacterial outer membrane biogenesis; LPS lipid A biosynthesis. Catalyzes the N-acylation of UDP-3-O-acylglucosamine using 3-hydroxyacyl-ACP as the acyl donor. Is involved in the biosynthesis of lipid A, a phosphorylated glycolipid that anchors the lipopolysaccharide to the outer membrane of the cell. The sequence is that of UDP-3-O-acylglucosamine N-acyltransferase from Rippkaea orientalis (strain PCC 8801 / RF-1) (Cyanothece sp. (strain PCC 8801)).